The chain runs to 151 residues: Large ribosomal subunit protein uL15 (151 aa).

The interval 1-58 is disordered; that stretch reads MTSISLDSLKPNKGARKRKTRKGRGIAAGQGASCGFGMRGQKSRSGRPTRPGFEGGQM. Basic residues predominate over residues 13-24; that stretch reads KGARKRKTRKGR. Residues 26–38 are compositionally biased toward gly residues; that stretch reads IAAGQGASCGFGM.

It belongs to the universal ribosomal protein uL15 family. In terms of assembly, part of the 50S ribosomal subunit.

Functionally, binds to the 23S rRNA. This chain is Large ribosomal subunit protein uL15, found in Prochlorococcus marinus (strain SARG / CCMP1375 / SS120).